We begin with the raw amino-acid sequence, 462 residues long: MDNGMFSSFIMIKNLLLFCISMNLASHFGFSQMPTSSVKAETDDNITIFTRILDGLLDGYDNRLRPGLGERITQVRTDIYVTSFGPVSDTEMEYTIDVFFRQSWKDERLRFKGPMQRLPLNNLLASKIWTPDTFFHNGKKSIAHNMTTPNKLLRLEDDGTLLYTMRLTISAECPMQLEDFPMDAHACPLKFGSYAYPNSEVIYVWTNGTAKSVVVAEDGSRLNQYHLMGQTVGTENISTSTGEYTIMTAHFHLKRKIGYFVIQTYLPCIMTVILSQVSFWLNRESVPARTVFGVTTVLTMTTLSISARNSLPKVAYATAMDWFIAVCYAFVFSALIEFATVNYFTKRGWAWDGKKALEAAKIKKKERELTINKSTNAYTTGKMTHPPNIPKEQTPAGTTNASSASVKPEDKASENKKTYNSISKIDKMSRIIFPLLFGTFNLVYWATYLNREPVIKGATSPK.

A signal peptide spans 1-31; that stretch reads MDNGMFSSFIMIKNLLLFCISMNLASHFGFS. The Extracellular portion of the chain corresponds to 32–260; it reads QMPTSSVKAE…FHLKRKIGYF (229 aa). Asn45 carries an N-linked (GlcNAc...) asparagine glycan. Arg101 contributes to the 4-aminobutanoate binding site. Asn145 is a glycosylation site (N-linked (GlcNAc...) asparagine). Position 164 (Thr164) interacts with 4-aminobutanoate. Cys173 and Cys187 are joined by a disulfide. 2 N-linked (GlcNAc...) asparagine glycosylation sites follow: Asn207 and Asn236. Helical transmembrane passes span 261-281, 287-308, and 319-340; these read VIQT…SFWL, PART…ISAR, and AMDW…EFAT. Topologically, residues 341-427 are cytoplasmic; it reads VNYFTKRGWA…TYNSISKIDK (87 aa). A Glycyl lysine isopeptide (Lys-Gly) (interchain with G-Cter in ubiquitin) cross-link involves residue Lys355. The tract at residues 375 to 412 is disordered; the sequence is TNAYTTGKMTHPPNIPKEQTPAGTTNASSASVKPEDKA. A compositionally biased stretch (polar residues) spans 395 to 405; that stretch reads PAGTTNASSAS. A helical transmembrane segment spans residues 428 to 448; that stretch reads MSRIIFPLLFGTFNLVYWATY.

It belongs to the ligand-gated ion channel (TC 1.A.9) family. Gamma-aminobutyric acid receptor (TC 1.A.9.5) subfamily. GABRA5 sub-subfamily. Heteropentamer, formed by a combination of alpha (GABRA1-6), beta (GABRB1-3), gamma (GABRG1-3), delta (GABRD), epsilon (GABRE), rho (GABRR1-3), pi (GABRP) and theta (GABRQ) chains, each subunit exhibiting distinct physiological and pharmacological properties.

It is found in the postsynaptic cell membrane. The protein resides in the cell membrane. It catalyses the reaction chloride(in) = chloride(out). In terms of biological role, alpha subunit of the heteropentameric ligand-gated chloride channel gated by gamma-aminobutyric acid (GABA), a major inhibitory neurotransmitter in the brain. GABA-gated chloride channels, also named GABA(A) receptors (GABAAR), consist of five subunits arranged around a central pore and contain GABA active binding site(s) located at the alpha and beta subunit interface(s). When activated by GABA, GABAARs selectively allow the flow of chloride anions across the cell membrane down their electrochemical gradient. GABAARs containing alpha-5/GABRA5 subunits are mainly extrasynaptic and contribute to the tonic GABAergic inhibition in the hippocampus. Extrasynaptic alpha-5-containing GABAARs in CA1 pyramidal neurons play a role in learning and memory processes. This chain is Gamma-aminobutyric acid receptor subunit alpha-5 (GABRA5), found in Bos taurus (Bovine).